A 108-amino-acid polypeptide reads, in one-letter code: UPF0060 membrane protein YnfA (108 aa).

At 1–5 the chain is on the periplasmic side; that stretch reads MLKTT. The helical transmembrane segment at 6-26 threads the bilayer; it reads LLFFVTALCEIIGCFLPWLWI. Topologically, residues 27 to 30 are cytoplasmic; the sequence is KRGA. The helical transmembrane segment at 31–51 threads the bilayer; the sequence is SVWWLLPAAASLALFVWLLTL. Topologically, residues 52–60 are periplasmic; the sequence is HPAASGRVY. The helical transmembrane segment at 61–81 threads the bilayer; the sequence is AAYGGVYVCTALLWLRVVDGV. The Cytoplasmic portion of the chain corresponds to 82–84; sequence RLT. Residues 85-105 traverse the membrane as a helical segment; the sequence is VYDWCGALIALCGMLIIVVGW. Topologically, residues 106–108 are periplasmic; it reads GRT.

This sequence belongs to the UPF0060 family.

Its subcellular location is the cell inner membrane. This is UPF0060 membrane protein YnfA from Salmonella paratyphi A (strain ATCC 9150 / SARB42).